Consider the following 227-residue polypeptide: Heptaprenylglyceryl phosphate synthase (227 aa).

K13 lines the sn-glycerol 1-phosphate pocket. Residues D15 and T41 each coordinate Mg(2+). Sn-glycerol 1-phosphate contacts are provided by residues 159 to 164, G189, and 209 to 210; these read YLEYSG and GN.

The protein belongs to the GGGP/HepGP synthase family. Group I subfamily. Homodimer. Mg(2+) is required as a cofactor.

It catalyses the reaction sn-glycerol 1-phosphate + all-trans-heptaprenyl diphosphate = 3-heptaprenyl-sn-glycero-1-phosphate + diphosphate. The protein operates within membrane lipid metabolism; glycerophospholipid metabolism. Prenyltransferase that catalyzes in vivo the transfer of the heptaprenyl moiety of heptaprenyl pyrophosphate (HepPP; 35 carbon atoms) to the C3 hydroxyl of sn-glycerol-1-phosphate (G1P), producing heptaprenylglyceryl phosphate (HepGP). This reaction is an ether-bond-formation step in the biosynthesis of archaea-type G1P-based membrane lipids found in Bacillales. The chain is Heptaprenylglyceryl phosphate synthase from Exiguobacterium sibiricum (strain DSM 17290 / CCUG 55495 / CIP 109462 / JCM 13490 / 255-15).